The primary structure comprises 1351 residues: Serine-rich adhesin for platelets (1351 aa).

A signal peptide spans 1–89 (MSKRQKEFHD…VNMLHDQQAF (89 aa)). The tract at residues 90–230 (AASDAPLTSE…KTSTTSTSTA (141 aa)) is serine-rich repeat region 1, SRR1. Residues 100-111 (LNTQSETVGNQN) show a composition bias toward polar residues. Disordered stretches follow at residues 100-228 (LNTQ…TSTS) and 751-1323 (NSMS…GLLG). Composition is skewed to low complexity over residues 112–133 (STTIEASTSTTDSTSVTKNSSS) and 149–228 (NVTS…TSTS). Residues 231–751 (PIKLRTFSRL…TTFKYEVTRN (521 aa)) are non-repeat region (NRR). A compositionally biased stretch (low complexity) spans 752-1294 (SMSDSVSTSG…SQSTLSATSE (543 aa)). The segment at 752–1312 (SMSDSVSTSG…AQSEKRLPDT (561 aa)) is serine-rich repeat region 1, SRR1. The LPXTG sorting signal motif lies at 1309–1313 (LPDTG). Position 1312 is a pentaglycyl murein peptidoglycan amidated threonine (Thr1312). Residues 1313–1351 (GDSIKQNGLLGGVMTLLVGLGLMKRKKKKDENDQDDSQA) constitute a propeptide, removed by sortase.

The protein belongs to the serine-rich repeat protein (SRRP) family. Proteolytically cleaved by a metalloprotease. Post-translationally, glycosylated. It is probable that most of the Ser residues in SSR1 and SSR2 are O-GlcNAcylated. Sequential glycosylation by sugar transferases are able to generate complex sugar polymorphisms.

The protein localises to the secreted. It localises to the cell wall. Its function is as follows. Mediates binding to human platelets, possibly through a receptor-ligand interaction. Probably associated with virulence in endovascular infection. This Staphylococcus aureus (strain MRSA252) protein is Serine-rich adhesin for platelets (sasA).